We begin with the raw amino-acid sequence, 1271 residues long: Probable WRKY transcription factor protein 1 (1271 aa).

Polar residues predominate over residues 1–12; that stretch reads MGAQYSTELNKY. 3 disordered regions span residues 1-138, 204-312, and 370-515; these read MGAQ…NSDR, NNNN…QQNG, and NNNN…RTNS. Residues 9 to 71 are a coiled coil; the sequence is LNKYNNNNNN…NNNNNNNNNN (63 aa). 4 stretches are compositionally biased toward low complexity: residues 13–103, 116–135, 204–216, and 223–259; these read NNNN…NNNN, INNT…NNNN, NNNN…NENN, and SSTT…NNNN. A compositionally biased stretch (acidic residues) spans 260–274; it reads NEDDEDDYGDDDTIE. Residues 297–312 show a composition bias toward polar residues; the sequence is SNLNDTNGGNSPQQNG. Residues 320–372 adopt a coiled-coil conformation; that stretch reads KKLLALQQKQLEQEQEQKQQQKQQQQQQQQQQQQQQQQQQQQQKDAIENINNN. Residues 370-388 are compositionally biased toward low complexity; that stretch reads NNNNNNKLQPIVKNSVNKT. The segment covering 413–442 has biased composition (acidic residues); sequence NEDEYDASDEYIDDDDDDDEKYDDDDDEYF. Residues 443–458 show a composition bias toward low complexity; sequence EGNNNNNYKKNNISNK. Residues 475–487 show a composition bias toward basic and acidic residues; it reads EIFKQKKLNHDKN. The segment covering 488-515 has biased composition (polar residues); sequence QSNPKQQLTSHSEFDNSLLNKNQSRTNS. Residues 520-574 adopt a coiled-coil conformation; that stretch reads LQIKEENYHQIQQEHGEKQQQQQQQQQQPQQQQQQQQQQQQQQQQEMQVDKEQTE. The span at 578 to 587 shows a compositional bias: basic and acidic residues; the sequence is NTNKKEEQKP. 2 disordered regions span residues 578-650 and 667-811; these read NTNK…EGFL and SKKS…NISN. The segment covering 610–642 has biased composition (low complexity); the sequence is NNENNNNNNNNNNNNNNNNNNNNNNNNNNYRNN. Residues 672–702 show a composition bias toward polar residues; it reads NVVPTSPKSNLSDQQPPFSPVQISPQKQSPA. Low complexity-rich tracts occupy residues 703–715, 725–766, and 774–811; these read TTTT…TPTP, NNNI…NNIN, and NSTQ…NISN. A coiled-coil region spans residues 766 to 786; that stretch reads NNEEDEENNSTQNNNNNNNNN. Residues 808-872 constitute a DNA-binding region (WRKY 1); it reads NISNIVSDGY…YKGEHCHGFP (65 aa). Residues Cys839, Cys844, His867, and His869 each coordinate Zn(2+). The segment at 890–1095 is disordered; sequence FEGLDGNNNN…RFNGTSESKG (206 aa). Low complexity predominate over residues 895–918; sequence GNNNNNNNNNNNNNNYSSNSNSNG. The segment covering 919 to 937 has biased composition (gly residues); that stretch reads NGNGNGNGNGNGNGNGNGN. A compositionally biased stretch (low complexity) spans 938-956; the sequence is SNGNQDQNGNSFNDQNGDS. The span at 957 to 966 shows a compositional bias: polar residues; it reads PTQHGQISPM. Low complexity predominate over residues 967 to 995; sequence NSPKNTIPTTTTTTTSISTYVNTNSTNKK. Basic and acidic residues predominate over residues 998–1010; sequence SKQEKKISVKNET. Residues 1011–1021 show a composition bias toward acidic residues; sequence TDDDEFQEDID. Residues 1013-1040 adopt a coiled-coil conformation; the sequence is DDEFQEDIDQLSNNNNNNNNNNNNNNNN. Low complexity predominate over residues 1025–1085; the sequence is NNNNNNNNNN…NNNNNNNNNN (61 aa). Residues 1105-1167 constitute a DNA-binding region (WRKY 2); the sequence is SSIDHLDDGF…YRGKHNHDPP (63 aa). Positions 1136, 1141, 1162, and 1164 each coordinate Zn(2+). Residues 1180–1210 form a disordered region; it reads NGLYNNNNNNNNNNNNNNNNNNNNNNINNIN. Low complexity predominate over residues 1184 to 1210; that stretch reads NNNNNNNNNNNNNNNNNNNNNNINNIN.

The protein belongs to the WRKY group I family.

The protein localises to the nucleus. Probable transcription factor. Interacts specifically with the W box (5'-(T)TGAC[CT]-3'), a frequently occurring elicitor-responsive cis-acting element. This Dictyostelium discoideum (Social amoeba) protein is Probable WRKY transcription factor protein 1 (wrky1).